Here is a 127-residue protein sequence, read N- to C-terminus: Small ribosomal subunit protein uS13 (127 aa).

Over residues 96-118 (LPVRGQRTHTNARTRKGPKRGIV) the composition is skewed to basic residues. The interval 96–127 (LPVRGQRTHTNARTRKGPKRGIVRAKPAAPAR) is disordered.

This sequence belongs to the universal ribosomal protein uS13 family. Part of the 30S ribosomal subunit. Forms a loose heterodimer with protein S19. Forms two bridges to the 50S subunit in the 70S ribosome.

Functionally, located at the top of the head of the 30S subunit, it contacts several helices of the 16S rRNA. In the 70S ribosome it contacts the 23S rRNA (bridge B1a) and protein L5 of the 50S subunit (bridge B1b), connecting the 2 subunits; these bridges are implicated in subunit movement. Contacts the tRNAs in the A and P-sites. The polypeptide is Small ribosomal subunit protein uS13 (Myxococcus xanthus (strain DK1622)).